We begin with the raw amino-acid sequence, 54 residues long: Large ribosomal subunit protein bL33A (54 aa).

Belongs to the bacterial ribosomal protein bL33 family.

This chain is Large ribosomal subunit protein bL33A, found in Streptomyces avermitilis (strain ATCC 31267 / DSM 46492 / JCM 5070 / NBRC 14893 / NCIMB 12804 / NRRL 8165 / MA-4680).